A 61-amino-acid polypeptide reads, in one-letter code: Large ribosomal subunit protein uL30 (61 aa).

The protein belongs to the universal ribosomal protein uL30 family. Part of the 50S ribosomal subunit.

The polypeptide is Large ribosomal subunit protein uL30 (Legionella pneumophila (strain Paris)).